The primary structure comprises 118 residues: UPF0295 protein GWCH70_0499 (118 aa).

The next 2 helical transmembrane spans lie at 12–32 (IRTF…IGIF) and 42–62 (LFMI…FWIG).

This sequence belongs to the UPF0295 family.

It is found in the cell membrane. This is UPF0295 protein GWCH70_0499 from Geobacillus sp. (strain WCH70).